We begin with the raw amino-acid sequence, 166 residues long: NAD(P)H-quinone oxidoreductase subunit I, chloroplastic (166 aa).

2 consecutive 4Fe-4S ferredoxin-type domains span residues 55–84 (GRIH…VDWK) and 95–124 (LNYS…MTEE). The [4Fe-4S] cluster site is built by Cys64, Cys67, Cys70, Cys74, Cys104, Cys107, Cys110, and Cys114.

It belongs to the complex I 23 kDa subunit family. In terms of assembly, NDH is composed of at least 16 different subunits, 5 of which are encoded in the nucleus. It depends on [4Fe-4S] cluster as a cofactor.

Its subcellular location is the plastid. It is found in the chloroplast thylakoid membrane. The enzyme catalyses a plastoquinone + NADH + (n+1) H(+)(in) = a plastoquinol + NAD(+) + n H(+)(out). It carries out the reaction a plastoquinone + NADPH + (n+1) H(+)(in) = a plastoquinol + NADP(+) + n H(+)(out). NDH shuttles electrons from NAD(P)H:plastoquinone, via FMN and iron-sulfur (Fe-S) centers, to quinones in the photosynthetic chain and possibly in a chloroplast respiratory chain. The immediate electron acceptor for the enzyme in this species is believed to be plastoquinone. Couples the redox reaction to proton translocation, and thus conserves the redox energy in a proton gradient. This Guardiola tulocarpus protein is NAD(P)H-quinone oxidoreductase subunit I, chloroplastic.